Here is a 377-residue protein sequence, read N- to C-terminus: Dihydroorotase, mitochondrial (377 aa).

The Zn(2+) site is built by His-44, His-46, Lys-130, His-168, and His-206. The residue at position 130 (Lys-130) is an N6-carboxylysine. Ser-223 carries the phosphoserine modification. A Zn(2+)-binding site is contributed by Asp-280.

It belongs to the metallo-dependent hydrolases superfamily. DHOase family. Class II DHOase subfamily. Requires Zn(2+) as cofactor.

It is found in the mitochondrion. The enzyme catalyses (S)-dihydroorotate + H2O = N-carbamoyl-L-aspartate + H(+). It functions in the pathway pyrimidine metabolism; UMP biosynthesis via de novo pathway; (S)-dihydroorotate from bicarbonate: step 3/3. The sequence is that of Dihydroorotase, mitochondrial (PYR4) from Arabidopsis thaliana (Mouse-ear cress).